A 155-amino-acid chain; its full sequence is MVQSTVELWQKNLHRAKQARDLVFDYALGTSLITLLPIAGYYSLRLLLVLFLLVKMCRDIGKIWQFPRGQDLLAIAGNIFGAIGAVITAAVVWVTLLAIGIWVPYFDSFKGFAGLFTLTWMLGQSTNQYYANGALGHRFHQPVQPDQESINHGHL.

Transmembrane regions (helical) follow at residues 33-53 (ITLL…LFLL) and 83-103 (IGAV…GIWV).

To E.coli YdgK.

It is found in the cell membrane. This is an uncharacterized protein from Synechocystis sp. (strain ATCC 27184 / PCC 6803 / Kazusa).